The sequence spans 244 residues: Meiotic drive suppressor wtf2 (244 aa).

Residues M1–S10 are compositionally biased toward polar residues. Residues M1 to D68 form a disordered region. Over residues E17 to P30 the composition is skewed to basic and acidic residues. The next 4 membrane-spanning stretches (helical) occupy residues F73–C93, W110–F130, W149–P169, and L183–A203.

Belongs to the WTF family. As to quaternary structure, homomer. Interacts with other proteins that exhibit high sequence similarity.

Its subcellular location is the spore membrane. It is found in the vacuole membrane. Acts as a suppressor component of the dual wtf meiotic drive system, and can suppress but not confer meiotic drive by compatible poisons. Wtf meiotic drive systems promote unequal transmission of alleles from the parental zygote to progeny spores by encoding a poison and an antidote from the same locus; the poison is trans-acting and forms toxic aggregates in all spores within an ascus, wherease the antidote is spore-specific and targets aggregates for degradation by the vacuole. Meiotic drive by wtf systems therefore lead to poisoning of all progeny that do not inherit the dual poison/antidote allele, or express a compatible antidote. The polypeptide is Meiotic drive suppressor wtf2 (Schizosaccharomyces kambucha (Fission yeast)).